The sequence spans 382 residues: Carbamoyl phosphate synthase small chain (382 aa).

Residues 1-189 (MIKSALLVLE…GLPEAKSEDD (189 aa)) are CPSase. Residues serine 47, glycine 241, and glycine 243 each coordinate L-glutamine. The region spanning 193-380 (HVVAYDFGAK…IELIEQYRQS (188 aa)) is the Glutamine amidotransferase type-1 domain. Cysteine 269 serves as the catalytic Nucleophile. Residues leucine 270, glutamine 273, asparagine 311, glycine 313, and phenylalanine 314 each coordinate L-glutamine. Active-site residues include histidine 353 and glutamate 355.

Belongs to the CarA family. In terms of assembly, composed of two chains; the small (or glutamine) chain promotes the hydrolysis of glutamine to ammonia, which is used by the large (or ammonia) chain to synthesize carbamoyl phosphate. Tetramer of heterodimers (alpha,beta)4.

It catalyses the reaction hydrogencarbonate + L-glutamine + 2 ATP + H2O = carbamoyl phosphate + L-glutamate + 2 ADP + phosphate + 2 H(+). The catalysed reaction is L-glutamine + H2O = L-glutamate + NH4(+). It participates in amino-acid biosynthesis; L-arginine biosynthesis; carbamoyl phosphate from bicarbonate: step 1/1. The protein operates within pyrimidine metabolism; UMP biosynthesis via de novo pathway; (S)-dihydroorotate from bicarbonate: step 1/3. Its function is as follows. Small subunit of the glutamine-dependent carbamoyl phosphate synthetase (CPSase). CPSase catalyzes the formation of carbamoyl phosphate from the ammonia moiety of glutamine, carbonate, and phosphate donated by ATP, constituting the first step of 2 biosynthetic pathways, one leading to arginine and/or urea and the other to pyrimidine nucleotides. The small subunit (glutamine amidotransferase) binds and cleaves glutamine to supply the large subunit with the substrate ammonia. This chain is Carbamoyl phosphate synthase small chain, found in Salmonella typhimurium (strain LT2 / SGSC1412 / ATCC 700720).